Consider the following 113-residue polypeptide: Hydrogenase maturation factor HypA (113 aa).

His-2 lines the Ni(2+) pocket. Zn(2+) contacts are provided by Cys-73, Cys-76, Cys-89, and Cys-92.

Belongs to the HypA/HybF family.

Functionally, involved in the maturation of [NiFe] hydrogenases. Required for nickel insertion into the metal center of the hydrogenase. The protein is Hydrogenase maturation factor HypA of Paracoccus denitrificans (strain Pd 1222).